The primary structure comprises 898 residues: MGISFSIPFDPCVNKVSQWLDMKVSYTHNLEKNLVALETTMEELKAKRDDLLRKLKREEDRGLQTLGEIKVWLNRVETIESRVNDLLNARNAELQRLCLCGFCSKSLTTSYRYGKSVFLKLREVEKLERRVFEVISDQASTSEVEEQQLQPTIVGQETMLDNAWNHLMEDGVGIMGLYGMGGVGKTTLLTQINNKFSKYMCGFDSVIWVVVSKEVNVENILDEIAQKVHISGEKWDTKYKYQKGVYLYNFLRKMRFVLFLDDIWEKVNLVEIGVPFPTIKNKCKVVFTTRSLDVCTSMGVEKPMEVQCLADNDAYDLFQKKVGQITLGSDPEIRELSRVVAKKCCGLPLALNVVSETMSCKRTVQEWRHAIYVLNSYAAKFSGMDDKILPLLKYSYDSLKGEDVKMCLLYCALFPEDAKIRKENLIEYWICEEIIDGSEGIDKAENQGYEIIGSLVRASLLMEEVELDGANIVCLHDVVREMALWIASDLGKQNEAFIVRASVGLREILKVENWNVVRRMSLMKNNIAHLDGRLDCMELTTLLLQSTHLEKISSEFFNSMPKLAVLDLSGNYYLSELPNGISELVSLQYLNLSSTGIRHLPKGLQELKKLIHLYLERTSQLGSMVGISCLHNLKVLKLSGSSYAWDLDTVKELEALEHLEVLTTTIDDCTLGTDQFLSSHRLMSCIRFLKISNNSNRNRNSSRISLPVTMDRLQEFTIEHCHTSEIKMGRICSFSSLIEVNLSNCRRLRELTFLMFAPNLKRLHVVSSNQLEDIINKEKAHDGEKSGIVPFPKLNELHLYNLRELKNIYWSPLPFPCLEKINVMGCPNLKKLPLDSKSGKHGGNGLIITHREMEWITRVEWEDEATKTRFLANRSSFSSSLICFSNDLVSRDMNCFHL.

The stretch at Val-24–Asn-88 forms a coiled coil. The NB-ARC domain occupies Asp-137–Gly-440. Residue Gly-179–Thr-186 coordinates ATP. LRR repeat units follow at residues Val-516–Met-537, Glu-538–Ser-559, Lys-562–Leu-584, Ser-586–Lys-608, Lys-609–His-631, and Asn-632–Glu-654.

The protein belongs to the disease resistance NB-LRR family.

Potential disease resistance protein. This is Putative disease resistance protein At1g63350 from Arabidopsis thaliana (Mouse-ear cress).